A 420-amino-acid polypeptide reads, in one-letter code: Serine hydroxymethyltransferase (420 aa).

(6S)-5,6,7,8-tetrahydrofolate-binding positions include L121 and 125–127 (GHL). Position 230 is an N6-(pyridoxal phosphate)lysine (K230). Residues E246 and 354–356 (SPF) each bind (6S)-5,6,7,8-tetrahydrofolate.

It belongs to the SHMT family. In terms of assembly, homodimer. Pyridoxal 5'-phosphate serves as cofactor.

It localises to the cytoplasm. It catalyses the reaction (6R)-5,10-methylene-5,6,7,8-tetrahydrofolate + glycine + H2O = (6S)-5,6,7,8-tetrahydrofolate + L-serine. The protein operates within one-carbon metabolism; tetrahydrofolate interconversion. Its pathway is amino-acid biosynthesis; glycine biosynthesis; glycine from L-serine: step 1/1. In terms of biological role, catalyzes the reversible interconversion of serine and glycine with tetrahydrofolate (THF) serving as the one-carbon carrier. This reaction serves as the major source of one-carbon groups required for the biosynthesis of purines, thymidylate, methionine, and other important biomolecules. Also exhibits THF-independent aldolase activity toward beta-hydroxyamino acids, producing glycine and aldehydes, via a retro-aldol mechanism. This Rickettsia akari (strain Hartford) protein is Serine hydroxymethyltransferase.